An 871-amino-acid polypeptide reads, in one-letter code: Translation initiation factor IF-2 (871 aa).

Disordered stretches follow at residues K60 to K101 and E184 to S203. Residues K61 to K72 are compositionally biased toward basic residues. The span at K73 to K101 shows a compositional bias: basic and acidic residues. Residues T370–E537 form the tr-type G domain. A G1 region spans residues G379–T386. Position 379-386 (G379–T386) interacts with GTP. The interval G404–H408 is G2. Positions D425–G428 are G3. Residues D425 to H429 and N479 to D482 contribute to the GTP site. Residues N479–D482 are G4. The G5 stretch occupies residues S515–K517.

This sequence belongs to the TRAFAC class translation factor GTPase superfamily. Classic translation factor GTPase family. IF-2 subfamily.

The protein resides in the cytoplasm. Its function is as follows. One of the essential components for the initiation of protein synthesis. Protects formylmethionyl-tRNA from spontaneous hydrolysis and promotes its binding to the 30S ribosomal subunits. Also involved in the hydrolysis of GTP during the formation of the 70S ribosomal complex. This is Translation initiation factor IF-2 from Campylobacter jejuni subsp. jejuni serotype O:23/36 (strain 81-176).